The primary structure comprises 362 residues: 3-dehydroquinate synthase (362 aa).

NAD(+) is bound by residues 70–75, 104–108, 128–129, lysine 141, and lysine 150; these read DGESYK, GVVGD, and TT. Glutamate 183, histidine 246, and histidine 263 together coordinate Zn(2+).

This sequence belongs to the sugar phosphate cyclases superfamily. Dehydroquinate synthase family. It depends on Co(2+) as a cofactor. The cofactor is Zn(2+). NAD(+) serves as cofactor.

Its subcellular location is the cytoplasm. It carries out the reaction 7-phospho-2-dehydro-3-deoxy-D-arabino-heptonate = 3-dehydroquinate + phosphate. The protein operates within metabolic intermediate biosynthesis; chorismate biosynthesis; chorismate from D-erythrose 4-phosphate and phosphoenolpyruvate: step 2/7. Catalyzes the conversion of 3-deoxy-D-arabino-heptulosonate 7-phosphate (DAHP) to dehydroquinate (DHQ). This chain is 3-dehydroquinate synthase, found in Saccharophagus degradans (strain 2-40 / ATCC 43961 / DSM 17024).